The primary structure comprises 951 residues: Valine--tRNA ligase (951 aa).

A 'HIGH' region motif is present at residues 42 to 52 (PNVTGSLHMGH). The short motif at 554 to 558 (KMSKS) is the 'KMSKS' region element. Lys-557 is a binding site for ATP. Residues 880 to 914 (AGLIDKAAELDRLAKEVAKLEAEIGRIESKLSNEG) are a coiled coil.

It belongs to the class-I aminoacyl-tRNA synthetase family. ValS type 1 subfamily. Monomer.

It is found in the cytoplasm. It carries out the reaction tRNA(Val) + L-valine + ATP = L-valyl-tRNA(Val) + AMP + diphosphate. Functionally, catalyzes the attachment of valine to tRNA(Val). As ValRS can inadvertently accommodate and process structurally similar amino acids such as threonine, to avoid such errors, it has a 'posttransfer' editing activity that hydrolyzes mischarged Thr-tRNA(Val) in a tRNA-dependent manner. This chain is Valine--tRNA ligase, found in Pectobacterium atrosepticum (strain SCRI 1043 / ATCC BAA-672) (Erwinia carotovora subsp. atroseptica).